The chain runs to 129 residues: MGKAKVPRQLKDNEAKAVARTIRVSPQKLNLVVAMIRGKRVGVALADLAFSRKRIAGTVKKTLESAIANAENNHDLDIDSLIVAEAYVGKSVVVKRFHVRGRGRASRIERPFSHLTIIVREVTEKVEAA.

The protein belongs to the universal ribosomal protein uL22 family. Part of the 50S ribosomal subunit.

This protein binds specifically to 23S rRNA; its binding is stimulated by other ribosomal proteins, e.g. L4, L17, and L20. It is important during the early stages of 50S assembly. It makes multiple contacts with different domains of the 23S rRNA in the assembled 50S subunit and ribosome. In terms of biological role, the globular domain of the protein is located near the polypeptide exit tunnel on the outside of the subunit, while an extended beta-hairpin is found that lines the wall of the exit tunnel in the center of the 70S ribosome. This is Large ribosomal subunit protein uL22 from Bartonella quintana (strain Toulouse) (Rochalimaea quintana).